Reading from the N-terminus, the 225-residue chain is UPF0758 protein XCV4028 (225 aa).

An MPN domain is found at 102-224; that stretch reads ALSDPPSVGR…PVSFAERGWL (123 aa). Zn(2+) is bound by residues histidine 173, histidine 175, and aspartate 186. The short motif at 173–186 is the JAMM motif element; sequence HNHPSGNPEPSEAD.

Belongs to the UPF0758 family.

This is UPF0758 protein XCV4028 from Xanthomonas euvesicatoria pv. vesicatoria (strain 85-10) (Xanthomonas campestris pv. vesicatoria).